Here is a 202-residue protein sequence, read N- to C-terminus: Diadenylate cyclase (202 aa).

The chain crosses the membrane as a helical span at residues 6–26 (VFSVIILVLLFLILALTLLFV). One can recognise a DAC domain in the interval 29 to 185 (NKRTRSFVIR…RGVIKTLSSN (157 aa)).

Belongs to the adenylate cyclase family. DacB/CdaS subfamily. As to quaternary structure, probably oligomerizes.

The protein resides in the cell membrane. It carries out the reaction 2 ATP = 3',3'-c-di-AMP + 2 diphosphate. Functionally, catalyzes the condensation of 2 ATP molecules into cyclic di-AMP (c-di-AMP), a second messenger used to regulate differing processes in different bacteria. In Mycoplasma pneumoniae (strain ATCC 29342 / M129 / Subtype 1) (Mycoplasmoides pneumoniae), this protein is Diadenylate cyclase.